The sequence spans 185 residues: Elongation factor P (185 aa).

This sequence belongs to the elongation factor P family.

The protein resides in the cytoplasm. The protein operates within protein biosynthesis; polypeptide chain elongation. Involved in peptide bond synthesis. Stimulates efficient translation and peptide-bond synthesis on native or reconstituted 70S ribosomes in vitro. Probably functions indirectly by altering the affinity of the ribosome for aminoacyl-tRNA, thus increasing their reactivity as acceptors for peptidyl transferase. The protein is Elongation factor P of Azoarcus sp. (strain BH72).